Here is a 506-residue protein sequence, read N- to C-terminus: Sodium-coupled neutral amino acid symporter 2 (506 aa).

The interval 1-23 (MKKAEMGRFSISPDEDSSSYSSN) is disordered. Residues 1-76 (MKKAEMGRFS…HPGTTSFGMS (76 aa)) are Cytoplasmic-facing. Residues 1-96 (MKKAEMGRFS…SGILGLSYAM (96 aa)) are regulates protein turnover upon amino acid deprivation. 5 positions are modified to phosphoserine: serine 10, serine 12, serine 21, serine 22, and serine 55. The chain crosses the membrane as a helical span at residues 77–96 (VFNLSNAIVGSGILGLSYAM). Asparagine 82 contacts Na(+). The Extracellular segment spans residues 97 to 102 (ANTGIA). The chain crosses the membrane as a helical span at residues 103-123 (LFIILLTFVSIFSLYSVHLLL). Residues 124-158 (KTANEGGSLLYEQLGYKAFGLVGKLAASGSITMQN) lie on the Cytoplasmic side of the membrane. Residues 159 to 177 (IGAMSSYLFIVKYELPLVI) traverse the membrane as a helical segment. Residues 178 to 188 (QALTNIEDKTG) are Extracellular-facing. Residues 189–209 (LWYLNGNYLVLLVSLVVILPL) form a helical membrane-spanning segment. Over 210 to 217 (SLFRNLGY) the chain is Cytoplasmic. A helical transmembrane segment spans residues 218 to 238 (LGYTSGLSLLCMVFFLIVVIC). At 239–292 (KKFQVPCPVEAALIINETINTTLTQPTALVPALSHNVTENDSCRPHYFIFNSQT) the chain is on the extracellular side. A disulfide bridge connects residues cysteine 245 and cysteine 281. N-linked (GlcNAc...) asparagine glycosylation is found at asparagine 258 and asparagine 274. Residues 293-313 (VYAVPILIFSFVCHPAVLPIY) form a helical membrane-spanning segment. At 314–329 (EELKDRSRRRMMNVSK) the chain is on the cytoplasmic side. The chain crosses the membrane as a helical span at residues 330–350 (ISFFAMFLMYLLAALFGYLTF). The Extracellular segment spans residues 351 to 371 (YEHVESELLHTYSSILGTDIL). Residues 372–392 (LLIVRLAVLMAVTLTVPVVIF) form a helical membrane-spanning segment. Residue threonine 386 participates in Na(+) binding. The Cytoplasmic portion of the chain corresponds to 393-413 (PIRSSVTHLLCASKDFSWWRH). Residues 414-434 (SLITVSILAFTNLLVIFVPTI) form a helical membrane-spanning segment. Topologically, residues 435-436 (RD) are extracellular. Residues 437 to 457 (IFGFIGASAASMLIFILPSAF) traverse the membrane as a helical segment. The Cytoplasmic portion of the chain corresponds to 458 to 472 (YIKLVKKEPMKSVQK). The chain crosses the membrane as a helical span at residues 473-495 (IGALFFLLSGVLVMTGSMALIVL). Residues 496 to 506 (DWVHNAPGGGH) lie on the Extracellular side of the membrane.

Belongs to the amino acid/polyamine transporter 2 family. Polyubiquitination by NEDD4L regulates the degradation and the activity of SLC38A2. Ubiquitously expressed. Expressed in neocortex. Widely expressed in the central nervous system with higher concentrations in caudal regions. Expressed by glutamatergic and GABAergic neurons together with astrocytes and other non-neuronal cells in the cerebral cortex (at protein level).

Its subcellular location is the cell membrane. It carries out the reaction L-alanine(in) + Na(+)(in) = L-alanine(out) + Na(+)(out). The enzyme catalyses glycine(in) + Na(+)(in) = glycine(out) + Na(+)(out). It catalyses the reaction L-serine(in) + Na(+)(in) = L-serine(out) + Na(+)(out). The catalysed reaction is L-proline(in) + Na(+)(in) = L-proline(out) + Na(+)(out). It carries out the reaction L-methionine(in) + Na(+)(in) = L-methionine(out) + Na(+)(out). The enzyme catalyses L-histidine(in) + Na(+)(in) = L-histidine(out) + Na(+)(out). It catalyses the reaction L-asparagine(in) + Na(+)(in) = L-asparagine(out) + Na(+)(out). The catalysed reaction is L-glutamine(in) + Na(+)(in) = L-glutamine(out) + Na(+)(out). It carries out the reaction L-threonine(in) + Na(+)(in) = L-threonine(out) + Na(+)(out). The enzyme catalyses L-leucine(in) + Na(+)(in) = L-leucine(out) + Na(+)(out). It catalyses the reaction L-phenylalanine(in) + Na(+)(in) = L-phenylalanine(out) + Na(+)(out). Inhibited by N-methyl-D-glucamine. Inhibited by choline. Allosteric regulation of sodium ions binding by pH. Symporter that cotransports neutral amino acids and sodium ions from the extracellular to the intracellular side of the cell membrane. The transport is pH-sensitive, Li(+)-intolerant, electrogenic, driven by the Na(+) electrochemical gradient and cotransports of neutral amino acids and sodium ions with a stoichiometry of 1:1. May function in the transport of amino acids at the blood-brain barrier. May function in the transport of amino acids in the supply of maternal nutrients to the fetus through the placenta. Maintains a key metabolic glutamine/glutamate balance underpinning retrograde signaling by dendritic release of the neurotransmitter glutamate. Transports L-proline in differentiating osteoblasts for the efficient synthesis of proline-enriched proteins and provides proline essential for osteoblast differentiation and bone formation during bone development. The sequence is that of Sodium-coupled neutral amino acid symporter 2 from Homo sapiens (Human).